A 485-amino-acid chain; its full sequence is GTPase Der (485 aa).

2 EngA-type G domains span residues 3 to 167 and 176 to 349; these read PTIA…PEPE and PVFA…NAAM. Residues 9-16, 56-60, 119-122, 182-189, 229-233, and 294-297 each bind GTP; these read GRPNVGKS, DTGGF, NKGE, DTAGV, and NKWD. The KH-like domain occupies 350–434; sequence IKMPTPKITR…PLRIQYNVSE (85 aa). Positions 435-485 are disordered; the sequence is NPYENAEDKPKKKPLRRVSLSNRIEKREGRKEEKNRFKKKTKVSVKKQFSK. The segment covering 457-469 has biased composition (basic and acidic residues); sequence RIEKREGRKEEKN. Basic residues predominate over residues 470 to 485; that stretch reads RFKKKTKVSVKKQFSK.

It belongs to the TRAFAC class TrmE-Era-EngA-EngB-Septin-like GTPase superfamily. EngA (Der) GTPase family. Associates with the 50S ribosomal subunit.

GTPase that plays an essential role in the late steps of ribosome biogenesis. The protein is GTPase Der of Neisseria meningitidis serogroup C / serotype 2a (strain ATCC 700532 / DSM 15464 / FAM18).